The chain runs to 137 residues: Holo-[acyl-carrier-protein] synthase (137 aa).

Mg(2+)-binding residues include Asp8 and Glu57.

This sequence belongs to the P-Pant transferase superfamily. AcpS family. Mg(2+) serves as cofactor.

It localises to the cytoplasm. The enzyme catalyses apo-[ACP] + CoA = holo-[ACP] + adenosine 3',5'-bisphosphate + H(+). In terms of biological role, transfers the 4'-phosphopantetheine moiety from coenzyme A to a Ser of acyl-carrier-protein. The chain is Holo-[acyl-carrier-protein] synthase from Cereibacter sphaeroides (strain ATCC 17029 / ATH 2.4.9) (Rhodobacter sphaeroides).